Consider the following 239-residue polypeptide: Ribose-5-phosphate isomerase A (239 aa).

Residues 31–34 (FGST), 88–91 (DGAD), and 101–104 (KGGG) each bind substrate. The Proton acceptor role is filled by E110. Residue K128 participates in substrate binding.

The protein belongs to the ribose 5-phosphate isomerase family. As to quaternary structure, homodimer.

It carries out the reaction aldehydo-D-ribose 5-phosphate = D-ribulose 5-phosphate. It participates in carbohydrate degradation; pentose phosphate pathway; D-ribose 5-phosphate from D-ribulose 5-phosphate (non-oxidative stage): step 1/1. In terms of biological role, catalyzes the reversible conversion of ribose-5-phosphate to ribulose 5-phosphate. The chain is Ribose-5-phosphate isomerase A from Chloroflexus aurantiacus (strain ATCC 29366 / DSM 635 / J-10-fl).